The following is a 471-amino-acid chain: Phosphoglycerate kinase (471 aa).

Substrate contacts are provided by residues 24 to 26, Arg41, 64 to 67, Arg127, and Arg169; these read DFN and HLSR. ATP is bound by residues Lys220, Gly307, Glu338, and 368-371; that span reads GGDS. The disordered stretch occupies residues 417-471; sequence KVEAVKEKTTTTTESASKEKSSTAKTASKPATSKTTAAKKPAEKKPAAKKPAAKK. Over residues 439-455 the composition is skewed to low complexity; it reads TAKTASKPATSKTTAAK.

Belongs to the phosphoglycerate kinase family. Monomer.

Its subcellular location is the cytoplasm. The enzyme catalyses (2R)-3-phosphoglycerate + ATP = (2R)-3-phospho-glyceroyl phosphate + ADP. It participates in carbohydrate degradation; glycolysis; pyruvate from D-glyceraldehyde 3-phosphate: step 2/5. This Malacoplasma penetrans (strain HF-2) (Mycoplasma penetrans) protein is Phosphoglycerate kinase.